The following is a 118-amino-acid chain: NADH-quinone oxidoreductase subunit A 2 (118 aa).

Helical transmembrane passes span 5 to 25, 62 to 82, and 87 to 107; these read YLPIIVLVVVAVLFGCGSLIF, IIAMLFILFDIEAVFLYPWAV, and LGMFGLMEMGVFIVILFVGYI.

Belongs to the complex I subunit 3 family. NDH-1 is composed of 14 different subunits. Subunits NuoA, H, J, K, L, M, N constitute the membrane sector of the complex.

It localises to the cell inner membrane. It carries out the reaction a quinone + NADH + 5 H(+)(in) = a quinol + NAD(+) + 4 H(+)(out). NDH-1 shuttles electrons from NADH, via FMN and iron-sulfur (Fe-S) centers, to quinones in the respiratory chain. The immediate electron acceptor for the enzyme in this species is believed to be ubiquinone. Couples the redox reaction to proton translocation (for every two electrons transferred, four hydrogen ions are translocated across the cytoplasmic membrane), and thus conserves the redox energy in a proton gradient. This is NADH-quinone oxidoreductase subunit A 2 from Geotalea uraniireducens (strain Rf4) (Geobacter uraniireducens).